Here is a 459-residue protein sequence, read N- to C-terminus: MAASASAAAGEEDWVLPSEVEVLESIYLDELQVIKGNGRTSPWEIYITLHPATAEDQDSQYVCFTLVLQVPAEYPHEVPQISIRNPRGLSDEQIHTILQVLGHVAKAGLGTAMLYELIEKGKEILTDNNIPHGQCVICLYGFQEKEAFTKTPCYHYFHCHCLARYIQHMEQELKAQGQEQEQERQHATTKQKAVGVQCPVCREPLVYDLASLKAAPEPQQPMELYQPSAESLRQQEERKRLYQRQQERGGIIDLEAERNRYFISLQQPPAPAEPESAVDVSKGSQPPSTLAAELSTSPAVQSTLPPPLPVATQHICEKIPGTRSNQQRLGETQKAMLDPPKPSRGPWRQPERRHPKGGECHAPKGTRDTQELPPPEGPLKEPMDLKPEPHSQGVEGPPQEKGPGSWQGPPPRRTRDCVRWERSKGRTPGSSYPRLPRGQGAYRPGTRRESLGLESKDGS.

The RWD domain occupies 18–128 (SEVEVLESIY…EKGKEILTDN (111 aa)). Zn(2+) contacts are provided by cysteine 135, cysteine 138, cysteine 153, histidine 155, histidine 158, cysteine 161, cysteine 198, and cysteine 201. An RING-type zinc finger spans residues 135–202 (CVICLYGFQE…AVGVQCPVCR (68 aa)). 2 disordered regions span residues 268–309 (PPAP…PPLP) and 322–459 (TRSN…KDGS). A compositionally biased stretch (polar residues) spans 282–303 (KGSQPPSTLAAELSTSPAVQST). Composition is skewed to basic and acidic residues over residues 349 to 370 (QPER…RDTQ), 378 to 389 (PLKEPMDLKPEP), 413 to 424 (RTRDCVRWERSK), and 446 to 459 (TRRE…KDGS). Serine 450 is subject to Phosphoserine.

Belongs to the RNF25 family. Interacts with UBE2D2, and may also interact with UBE2E1 and UBE2E3. Interacts with RELA/p65. Post-translationally, ubiquitinated; autoubiquitinated.

It localises to the cytoplasm. The catalysed reaction is S-ubiquitinyl-[E2 ubiquitin-conjugating enzyme]-L-cysteine + [acceptor protein]-L-lysine = [E2 ubiquitin-conjugating enzyme]-L-cysteine + N(6)-ubiquitinyl-[acceptor protein]-L-lysine.. Its pathway is protein modification; protein ubiquitination. Its function is as follows. E3 ubiquitin-protein ligase that plays a key role in the RNF14-RNF25 translation quality control pathway, a pathway that takes place when a ribosome has stalled during translation, and which promotes ubiquitination and degradation of translation factors on stalled ribosomes. Catalyzes ubiquitination of RPS27A in response to ribosome collisions, promoting activation of RNF14. RNF25 catalyzes ubiquitination of other ribosomal proteins on stalled ribosomes, such as RPL0, RPL1, RPL12, RPS13 and RPS17. Also involved in ubiquitination and degradation of stalled ETF1/eRF1. Independently of its function in the response to stalled ribosomes, mediates ubiquitination and subsequent proteasomal degradation of NKD2. May also stimulate transcription mediated by NF-kappa-B via its interaction with RELA/p65. The protein is E3 ubiquitin-protein ligase RNF25 of Homo sapiens (Human).